Consider the following 147-residue polypeptide: D-aminoacyl-tRNA deacylase (147 aa).

A Gly-cisPro motif, important for rejection of L-amino acids motif is present at residues 136-137 (GP).

It belongs to the DTD family. As to quaternary structure, homodimer.

Its subcellular location is the cytoplasm. The enzyme catalyses glycyl-tRNA(Ala) + H2O = tRNA(Ala) + glycine + H(+). It carries out the reaction a D-aminoacyl-tRNA + H2O = a tRNA + a D-alpha-amino acid + H(+). An aminoacyl-tRNA editing enzyme that deacylates mischarged D-aminoacyl-tRNAs. Also deacylates mischarged glycyl-tRNA(Ala), protecting cells against glycine mischarging by AlaRS. Acts via tRNA-based rather than protein-based catalysis; rejects L-amino acids rather than detecting D-amino acids in the active site. By recycling D-aminoacyl-tRNA to D-amino acids and free tRNA molecules, this enzyme counteracts the toxicity associated with the formation of D-aminoacyl-tRNA entities in vivo and helps enforce protein L-homochirality. This is D-aminoacyl-tRNA deacylase from Streptococcus pneumoniae (strain P1031).